The following is a 111-amino-acid chain: Large ribosomal subunit protein uL22 (111 aa).

The protein belongs to the universal ribosomal protein uL22 family. Part of the 50S ribosomal subunit.

Functionally, this protein binds specifically to 23S rRNA; its binding is stimulated by other ribosomal proteins, e.g. L4, L17, and L20. It is important during the early stages of 50S assembly. It makes multiple contacts with different domains of the 23S rRNA in the assembled 50S subunit and ribosome. In terms of biological role, the globular domain of the protein is located near the polypeptide exit tunnel on the outside of the subunit, while an extended beta-hairpin is found that lines the wall of the exit tunnel in the center of the 70S ribosome. The chain is Large ribosomal subunit protein uL22 from Geotalea daltonii (strain DSM 22248 / JCM 15807 / FRC-32) (Geobacter daltonii).